A 336-amino-acid polypeptide reads, in one-letter code: Fructose-1,6-bisphosphatase class 1 (336 aa).

4 residues coordinate Mg(2+): Glu-90, Asp-112, Leu-114, and Asp-115. Residues 115–118, Asn-211, and Lys-277 contribute to the substrate site; that span reads DGSS. Glu-283 is a Mg(2+) binding site.

Belongs to the FBPase class 1 family. In terms of assembly, homotetramer. The cofactor is Mg(2+).

The protein resides in the cytoplasm. The enzyme catalyses beta-D-fructose 1,6-bisphosphate + H2O = beta-D-fructose 6-phosphate + phosphate. The protein operates within carbohydrate biosynthesis; gluconeogenesis. This Pseudomonas putida (strain ATCC 700007 / DSM 6899 / JCM 31910 / BCRC 17059 / LMG 24140 / F1) protein is Fructose-1,6-bisphosphatase class 1.